A 103-amino-acid chain; its full sequence is Large ribosomal subunit protein uL24 (103 aa).

The protein belongs to the universal ribosomal protein uL24 family. In terms of assembly, part of the 50S ribosomal subunit.

One of two assembly initiator proteins, it binds directly to the 5'-end of the 23S rRNA, where it nucleates assembly of the 50S subunit. Functionally, one of the proteins that surrounds the polypeptide exit tunnel on the outside of the subunit. The chain is Large ribosomal subunit protein uL24 from Glaesserella parasuis serovar 5 (strain SH0165) (Haemophilus parasuis).